A 450-amino-acid chain; its full sequence is Serine incorporator 2 (450 aa).

A run of 11 helical transmembrane segments spans residues 5-27 (LGACSLLSCASCLCGSAPCILCG), 40-57 (LLFTSFLFLGVLVSIIML), 96-118 (AVYRMCFATAAFFFFFMLLMICV), 131-150 (GFWFFKFLILVGITVGAFYI), 160-182 (FYFGVVGSFLFILIQLILFVDFA), 203-225 (AGLFFFTFLFYLLSIAAVALMFV), 238-257 (VFISLNLTFCVCVSIIAVLP), 264-286 (PNSGLLQASVITLYTMFVTWSAL), 315-337 (VWWDAPSIVGLVIFILCTFFISL), 380-402 (TYSYSFFHFCLVLASLHVMMTLT), and 417-439 (WTSVWVKICASWAGLFLYLWTLV).

It belongs to the TDE1 family.

Its subcellular location is the cell membrane. The enzyme catalyses a 1,2-diacyl-sn-glycero-3-phospho-L-serine(in) = a 1,2-diacyl-sn-glycero-3-phospho-L-serine(out). It carries out the reaction a 1,2-diacyl-sn-glycero-3-phosphocholine(in) = a 1,2-diacyl-sn-glycero-3-phosphocholine(out). It catalyses the reaction a 1,2-diacyl-sn-glycero-3-phosphoethanolamine(in) = a 1,2-diacyl-sn-glycero-3-phosphoethanolamine(out). Its function is as follows. Non-ATP-dependent, non-specific lipid transporter for phosphatidylserine, phosphatidylcholine, and phosphatidylethanolamine. Functions as a scramblase that flips lipids in both directions across the membrane. In contrast to SERINC3 and SERINC5, has no effect on gammaretrovirus particles infectivity. The chain is Serine incorporator 2 (Serinc2) from Mus musculus (Mouse).